Reading from the N-terminus, the 90-residue chain is Small ribosomal subunit protein uS19 (90 aa).

The protein belongs to the universal ribosomal protein uS19 family.

Protein S19 forms a complex with S13 that binds strongly to the 16S ribosomal RNA. This Rhizorhabdus wittichii (strain DSM 6014 / CCUG 31198 / JCM 15750 / NBRC 105917 / EY 4224 / RW1) (Sphingomonas wittichii) protein is Small ribosomal subunit protein uS19.